The primary structure comprises 493 residues: Glutamyl-tRNA(Gln) amidotransferase subunit A (493 aa).

Active-site charge relay system residues include Lys-79 and Ser-159. The Acyl-ester intermediate role is filled by Ser-183.

It belongs to the amidase family. GatA subfamily. Heterotrimer of A, B and C subunits.

The catalysed reaction is L-glutamyl-tRNA(Gln) + L-glutamine + ATP + H2O = L-glutaminyl-tRNA(Gln) + L-glutamate + ADP + phosphate + H(+). In terms of biological role, allows the formation of correctly charged Gln-tRNA(Gln) through the transamidation of misacylated Glu-tRNA(Gln) in organisms which lack glutaminyl-tRNA synthetase. The reaction takes place in the presence of glutamine and ATP through an activated gamma-phospho-Glu-tRNA(Gln). The chain is Glutamyl-tRNA(Gln) amidotransferase subunit A from Brucella melitensis biotype 2 (strain ATCC 23457).